The primary structure comprises 135 residues: Fatty acid-binding protein 5 (135 aa).

Ala-2 bears the N-acetylalanine mark. Ser-3 carries the phosphoserine modification. The Nuclear localization signal motif lies at 24-34 (KELGVGLALRK). Cys-43, Thr-56, and Arg-109 together coordinate 1-eicosanoylglycerol. A disulfide bridge connects residues Cys-120 and Cys-127. 129–131 (RVY) contributes to the 1-eicosanoylglycerol binding site. Residue 129–131 (RVY) coordinates (9Z,12Z)-octadecadienoate. Residue Tyr-131 coordinates hexadecanoate. N-eicosanoyl ethanolamine is bound at residue Tyr-131. Tyr-131 is subject to Phosphotyrosine.

The protein belongs to the calycin superfamily. Fatty-acid binding protein (FABP) family. Monomer. Widely expressed.

Its subcellular location is the cytoplasm. The protein localises to the nucleus. It localises to the synapse. It is found in the postsynaptic density. The protein resides in the secreted. It catalyses the reaction hexadecanoate(out) = hexadecanoate(in). The catalysed reaction is (9Z,12Z)-octadecadienoate(out) = (9Z,12Z)-octadecadienoate(in). It carries out the reaction (9Z)-octadecenoate(out) = (9Z)-octadecenoate(in). In terms of biological role, intracellular carrier for long-chain fatty acids and related active lipids, such as endocannabinoids, that regulate the metabolism and actions of the ligands they bind. In addition to the cytosolic transport, selectively delivers specific fatty acids from the cytosol to the nucleus, wherein they activate nuclear receptors. Delivers retinoic acid to the nuclear receptor peroxisome proliferator-activated receptor delta; which promotes proliferation and survival. May also serve as a synaptic carrier of endocannabinoid at central synapses and thus controls retrograde endocannabinoid signaling. Modulates inflammation by regulating PTGES induction via NF-kappa-B activation, and prostaglandin E2 (PGE2) biosynthesis during inflammation. May be involved in keratinocyte differentiation. The protein is Fatty acid-binding protein 5 of Mus musculus (Mouse).